A 139-amino-acid chain; its full sequence is Small ribosomal subunit protein uS19 (139 aa).

This sequence belongs to the universal ribosomal protein uS19 family.

Functionally, protein S19 forms a complex with S13 that binds strongly to the 16S ribosomal RNA. In Methanoregula boonei (strain DSM 21154 / JCM 14090 / 6A8), this protein is Small ribosomal subunit protein uS19.